The following is a 176-amino-acid chain: Large ribosomal subunit protein uL6 (176 aa).

Over residues 151-170 (RPPEPYKGKGVRYADEQVRR) the composition is skewed to basic and acidic residues. The interval 151–176 (RPPEPYKGKGVRYADEQVRRKEAKKK) is disordered.

The protein belongs to the universal ribosomal protein uL6 family. Part of the 50S ribosomal subunit.

Functionally, this protein binds to the 23S rRNA, and is important in its secondary structure. It is located near the subunit interface in the base of the L7/L12 stalk, and near the tRNA binding site of the peptidyltransferase center. In Shewanella pealeana (strain ATCC 700345 / ANG-SQ1), this protein is Large ribosomal subunit protein uL6.